The following is a 174-amino-acid chain: Inner membrane protein p22 (174 aa).

Over 1–7 (MLHIKMT) the chain is Intravirion. The chain crosses the membrane as a helical span at residues 8-28 (ISTLLIALIVLLIIILVVFLY). The Virion surface portion of the chain corresponds to 29–174 (HKKQQPPKKV…LYLPRNHKYA (146 aa)).

This sequence belongs to the asfivirus inner membrane protein p22 family.

The protein resides in the virion membrane. Its subcellular location is the host cell membrane. The chain is Inner membrane protein p22 from African swine fever virus (isolate Pig/Kenya/KEN-50/1950) (ASFV).